Consider the following 616-residue polypeptide: Chaperone protein HscA (616 aa).

Belongs to the heat shock protein 70 family.

In terms of biological role, chaperone involved in the maturation of iron-sulfur cluster-containing proteins. Has a low intrinsic ATPase activity which is markedly stimulated by HscB. Involved in the maturation of IscU. In Salmonella arizonae (strain ATCC BAA-731 / CDC346-86 / RSK2980), this protein is Chaperone protein HscA.